The following is a 260-amino-acid chain: Triosephosphate isomerase (260 aa).

11–13 (NWK) serves as a coordination point for substrate. The Electrophile role is filled by H103. The active-site Proton acceptor is the E175. Substrate-binding positions include G181, S220, and 241–242 (GG).

It belongs to the triosephosphate isomerase family. Homodimer.

It localises to the cytoplasm. The enzyme catalyses D-glyceraldehyde 3-phosphate = dihydroxyacetone phosphate. It functions in the pathway carbohydrate biosynthesis; gluconeogenesis. The protein operates within carbohydrate degradation; glycolysis; D-glyceraldehyde 3-phosphate from glycerone phosphate: step 1/1. In terms of biological role, involved in the gluconeogenesis. Catalyzes stereospecifically the conversion of dihydroxyacetone phosphate (DHAP) to D-glyceraldehyde-3-phosphate (G3P). In Shewanella sp. (strain MR-4), this protein is Triosephosphate isomerase.